The sequence spans 283 residues: ATP phosphoribosyltransferase (283 aa).

The protein belongs to the ATP phosphoribosyltransferase family. Long subfamily. Mg(2+) is required as a cofactor.

Its subcellular location is the cytoplasm. It carries out the reaction 1-(5-phospho-beta-D-ribosyl)-ATP + diphosphate = 5-phospho-alpha-D-ribose 1-diphosphate + ATP. It participates in amino-acid biosynthesis; L-histidine biosynthesis; L-histidine from 5-phospho-alpha-D-ribose 1-diphosphate: step 1/9. Feedback inhibited by histidine. In terms of biological role, catalyzes the condensation of ATP and 5-phosphoribose 1-diphosphate to form N'-(5'-phosphoribosyl)-ATP (PR-ATP). Has a crucial role in the pathway because the rate of histidine biosynthesis seems to be controlled primarily by regulation of HisG enzymatic activity. The sequence is that of ATP phosphoribosyltransferase from Nocardia farcinica (strain IFM 10152).